The chain runs to 576 residues: uncharacterized protein (576 aa).

Residues 241–261 (DNTKAPSPTNTAGSRELSTPA) are compositionally biased toward polar residues. Residues 241-270 (DNTKAPSPTNTAGSRELSTPAGSPGKASLP) form a disordered region.

This is an uncharacterized protein from Bacillus subtilis (strain 168).